Consider the following 141-residue polypeptide: Putative pre-16S rRNA nuclease (141 aa).

This sequence belongs to the YqgF nuclease family.

It localises to the cytoplasm. In terms of biological role, could be a nuclease involved in processing of the 5'-end of pre-16S rRNA. The protein is Putative pre-16S rRNA nuclease of Aliivibrio fischeri (strain MJ11) (Vibrio fischeri).